A 327-amino-acid chain; its full sequence is Interleukin-12 subunit beta (327 aa).

A signal peptide spans 1-22; it reads MCHQKLTISWFAVVLLASPLMA. The region spanning 23 to 106 is the Ig-like C2-type domain; it reads IWELEKDVYV…LSHSRLLLHK (84 aa). Cys-50 and Cys-90 are oxidised to a cystine. N-linked (GlcNAc...) asparagine glycosylation is found at Asn-125, Asn-135, Asn-223, and Asn-315. Residues 238 to 327 form the Fibronectin type-III domain; that stretch reads PPKNLQLKPL…WSRWVSVPCS (90 aa).

Belongs to the IL-12B family. In terms of assembly, heterodimer with IL12A; disulfide-linked. The heterodimer is known as interleukin IL-12. Heterodimer with IL23A; disulfide-linked. The heterodimer is known as interleukin IL-23. Also secreted as a monomer. Interacts with NBR1; this interaction promotes IL-12 secretion.

The protein resides in the secreted. Functionally, cytokine that can act as a growth factor for activated T and NK cells, enhance the lytic activity of NK/lymphokine-activated killer cells, and stimulate the production of IFN-gamma by resting PBMC. Its function is as follows. Associates with IL23A to form the IL-23 interleukin, a heterodimeric cytokine which functions in innate and adaptive immunity. IL-23 may constitute with IL-17 an acute response to infection in peripheral tissues. IL-23 binds to a heterodimeric receptor complex composed of IL12RB1 and IL23R, activates the Jak-Stat signaling cascade, stimulates memory rather than naive T-cells and promotes production of pro-inflammatory cytokines. IL-23 induces autoimmune inflammation and thus may be responsible for autoimmune inflammatory diseases and may be important for tumorigenesis. The chain is Interleukin-12 subunit beta (IL12B) from Mesocricetus auratus (Golden hamster).